A 283-amino-acid chain; its full sequence is UPF0276 protein Anae109_1558 (283 aa).

Belongs to the UPF0276 family.

In Anaeromyxobacter sp. (strain Fw109-5), this protein is UPF0276 protein Anae109_1558.